Here is a 282-residue protein sequence, read N- to C-terminus: Ribosomal RNA small subunit methyltransferase A (282 aa).

Residues N28, L30, G55, E77, D103, and N122 each coordinate S-adenosyl-L-methionine.

This sequence belongs to the class I-like SAM-binding methyltransferase superfamily. rRNA adenine N(6)-methyltransferase family. RsmA subfamily.

Its subcellular location is the cytoplasm. It catalyses the reaction adenosine(1518)/adenosine(1519) in 16S rRNA + 4 S-adenosyl-L-methionine = N(6)-dimethyladenosine(1518)/N(6)-dimethyladenosine(1519) in 16S rRNA + 4 S-adenosyl-L-homocysteine + 4 H(+). Functionally, specifically dimethylates two adjacent adenosines (A1518 and A1519) in the loop of a conserved hairpin near the 3'-end of 16S rRNA in the 30S particle. May play a critical role in biogenesis of 30S subunits. This is Ribosomal RNA small subunit methyltransferase A from Paracoccus denitrificans (strain Pd 1222).